Here is a 417-residue protein sequence, read N- to C-terminus: Serine hydroxymethyltransferase (417 aa).

(6S)-5,6,7,8-tetrahydrofolate-binding positions include Leu-121 and Gly-125 to Leu-127. An N6-(pyridoxal phosphate)lysine modification is found at Lys-229. Ser-355 to Phe-357 is a (6S)-5,6,7,8-tetrahydrofolate binding site.

Belongs to the SHMT family. As to quaternary structure, homodimer. Pyridoxal 5'-phosphate is required as a cofactor.

It is found in the cytoplasm. The catalysed reaction is (6R)-5,10-methylene-5,6,7,8-tetrahydrofolate + glycine + H2O = (6S)-5,6,7,8-tetrahydrofolate + L-serine. It functions in the pathway one-carbon metabolism; tetrahydrofolate interconversion. Its pathway is amino-acid biosynthesis; glycine biosynthesis; glycine from L-serine: step 1/1. Functionally, catalyzes the reversible interconversion of serine and glycine with tetrahydrofolate (THF) serving as the one-carbon carrier. This reaction serves as the major source of one-carbon groups required for the biosynthesis of purines, thymidylate, methionine, and other important biomolecules. Also exhibits THF-independent aldolase activity toward beta-hydroxyamino acids, producing glycine and aldehydes, via a retro-aldol mechanism. The sequence is that of Serine hydroxymethyltransferase from Shewanella sp. (strain MR-4).